The following is a 274-amino-acid chain: Protein YeeZ (274 aa).

The first 24 residues, 1 to 24, serve as a signal peptide directing secretion; that stretch reads MKKVAIVGLGWLGMPLAMSLSARG. Residue 170-177 participates in ATP binding; the sequence is GRFFAGKT.

The polypeptide is Protein YeeZ (yeeZ) (Escherichia coli O157:H7).